Reading from the N-terminus, the 114-residue chain is U10-agatoxin-Ao1a (114 aa).

The signal sequence occupies residues 1-15; the sequence is MCVATCLCTFAYVLA. A propeptide spanning residues 16–32 is cleaved from the precursor; the sequence is KSDEGENLISKVEETQR. Intrachain disulfides connect Cys34/Cys53, Cys41/Cys59, Cys50/Cys86, Cys52/Cys76, and Cys61/Cys74. Residues 95–114 are disordered; that stretch reads GSQNPSLCKDPNPRRRRHGK.

Belongs to the neurotoxin 04 (omega-agtx) family. 03 (type II/III omega-agtx) subfamily. As to expression, expressed by the venom gland.

Its subcellular location is the secreted. Functionally, inhibits voltage-gated calcium channels (Cav). This is U10-agatoxin-Ao1a from Agelena orientalis (Funnel-web spider).